Reading from the N-terminus, the 694-residue chain is MARKFELKDYRNIGIMAHIDAGKTTTTERILFHTGKIHKIGETHDGVSQMDWMEQEKERGITITSAATTAFWKGKRINIIDTPGHVDFTVEVERSLRVLDGAVAVLDAQSGVEPQTETVWRQATNYSVPRIVYVNKMDKAGANFEASIESVRTKLNGNAVAIQLNIGAEADFSGLIDLVEMKAYNYDGQKEEIEYEIPIPEDLFEKASQMRLALAEAVADYDEEIFNNLLEEKEILPEQLKAAIRAATITGNFFPVVCGSSFKNKGVKKMIDAVIDYLPSPVDVPPIKAFRDEEEITIEASDDQEFSALAFKIMNDPFVGSLTFFRVYSGVLKKGTYIINSTKGKKERVGRILAMHANSREEIDEVRTGDIGAFVGLKDTTTGDSLISEKAKTFVLERMNFPEPVISQSLEPFSKAEIEKLATALQKLANEDPTFKTWTDIETGQTIIAGMGELHLDIIVDRLKREFNVQARVGKPQVSYRETITKSAEVEGKYIKQSGGRGQYGHVWIKFEPNPEEGFDFIDKIVGGKIPKEYIKSIQKGLEEKMQAGILAGYPLINLRATLFDGSFHEVDSSEMAFKIAASKALSRARDAVGTVLLEPIMDVSVFAPSEYAGDVMGDLSRRRGLVREQETRSDGANVIRGHVPLAEMFGYSTQLRSMTSGRGTYQMQFNHYEIVPKNISDVIVKQRAIKEDD.

The tr-type G domain maps to 8-282; it reads KDYRNIGIMA…AVIDYLPSPV (275 aa). Residues 17 to 24, 81 to 85, and 135 to 138 each bind GTP; these read AHIDAGKT, DTPGH, and NKMD.

The protein belongs to the TRAFAC class translation factor GTPase superfamily. Classic translation factor GTPase family. EF-G/EF-2 subfamily.

The protein localises to the cytoplasm. Catalyzes the GTP-dependent ribosomal translocation step during translation elongation. During this step, the ribosome changes from the pre-translocational (PRE) to the post-translocational (POST) state as the newly formed A-site-bound peptidyl-tRNA and P-site-bound deacylated tRNA move to the P and E sites, respectively. Catalyzes the coordinated movement of the two tRNA molecules, the mRNA and conformational changes in the ribosome. The protein is Elongation factor G of Mesomycoplasma hyopneumoniae (strain J / ATCC 25934 / NCTC 10110) (Mycoplasma hyopneumoniae).